A 775-amino-acid chain; its full sequence is MGRQKTKVPEEPQDRLDTSLDPYPDTNYLAPCNKETVMVTLYGATNLPTCKDSSEPWPYVVVKTTSEEANNHSPQARTSVTSEPTRAPIWGDTVNVEIQAEDTGREDVTLKVMDSNKKEELVSYEIPIKYLRAFHPYHFELKKNEKEDEATAKTRLYATVVRKGSLLPRYIGYDHTALEVFLRGVNEPLVNNPSPMVVIARVVPSYTEFKARKARQDPASVGLPLTQVSFPISSPMTFDVPRVSQNGCPQLSKPGGPPEQPLWNQSFLFLGRDGATSFSEDTALVLEYYPSASMKSSEPWTLNQPLGVSVLPLKSHLYRKMLTGKGLKGLQVERLPIFDTNLKTINGEAPSVNLAFQLLSSERPENFLTPNNSKTLPTLNPKILDENLGAIRESWSVSSLDSSQEAEELQPRDVEMNNYRRAMQKMAEDILALRKQANILEEENRMLRSHLTQQSIEEEQNRAEEENLAVSMKQRLLLNELDMKRLRDRVQHLQNELIRKNDREKELLLLYQAQQPQAAQLRRYQDKLQKMKGLEDTVRHQEKVIEKMEQILEERLHERKEPAPSNRPQGKPIMDAFAPQASGIPLGPAGENLAMDLYSMLLAENTRLRTELEKNRQQSAPIILQQQALPVDPGELGAGGDLAERLQDTNGPGHSKYTETMPAQDFLGGTSDKFSLLAKLEQAQSRILSLENQLEESARHWAREKQNLAIRLQEQQHGFGQSPNSIIVDQPHFARSQGSTTPRQNLKDEGYPGNIERPLQTHLTPGTRDIRHHLR.

2 disordered regions span residues 1 to 23 (MGRQ…LDPY) and 68 to 87 (EANN…PTRA). A compositionally biased stretch (basic and acidic residues) spans 7 to 18 (KVPEEPQDRLDT). The region spanning 12–141 (PQDRLDTSLD…RAFHPYHFEL (130 aa)) is the C2 domain. Over residues 71-84 (NHSPQARTSVTSEP) the composition is skewed to polar residues. Coiled coils occupy residues 414–561 (VEMN…ERKE) and 672–715 (DKFS…LQEQ). Residues 735 to 775 (RSQGSTTPRQNLKDEGYPGNIERPLQTHLTPGTRDIRHHLR) form a disordered region.

The sequence is that of Coiled-coil domain-containing protein 33 (Ccdc33) from Rattus norvegicus (Rat).